The sequence spans 347 residues: S-adenosylmethionine:tRNA ribosyltransferase-isomerase (347 aa).

This sequence belongs to the QueA family. Monomer.

It localises to the cytoplasm. The enzyme catalyses 7-aminomethyl-7-carbaguanosine(34) in tRNA + S-adenosyl-L-methionine = epoxyqueuosine(34) in tRNA + adenine + L-methionine + 2 H(+). The protein operates within tRNA modification; tRNA-queuosine biosynthesis. In terms of biological role, transfers and isomerizes the ribose moiety from AdoMet to the 7-aminomethyl group of 7-deazaguanine (preQ1-tRNA) to give epoxyqueuosine (oQ-tRNA). In Pseudomonas aeruginosa (strain LESB58), this protein is S-adenosylmethionine:tRNA ribosyltransferase-isomerase.